A 203-amino-acid polypeptide reads, in one-letter code: MGQVVSMVARRANRFNVENRAHRVLEREKPTPAPKFDSNLRDMERTLELDPKFVDKLNMKDSSLDGRLKDVYVTSQDRFIKRVQERQAAEAAADNVEQRPLPLERKTPDDFEYGYLEPNRISPGHCTLRQALKFINDHQLDPESWPAKKIANEYKLKEPLVENILHYFKTFNMYIPDQKYKDTMLTQATQPLLRVKSSSEGNP.

The protein belongs to the NDUFAF4 family. As to quaternary structure, together with NdufAF3 associates with mitochondrial complex I assembly intermediates during its biogenesis.

In terms of biological role, involved in the assembly of mitochondrial NADH:ubiquinone oxidoreductase complex (complex I). Together with NdufAF3, involved in biogenesis of complex 1 modules N, Q and P-peripheral, but not the P-distal module. Required for recruitment of the complex I assembly factor Timmdc1 to complex 1 assembly intermediates. This is NADH dehydrogenase [ubiquinone] 1 alpha subcomplex assembly factor 4 from Drosophila melanogaster (Fruit fly).